The following is a 533-amino-acid chain: Berberine bridge enzyme-like 12 (533 aa).

The N-terminal stretch at 1-20 is a signal peptide; that stretch reads MYLIFLLFFAASYSMSLSSA. An intrachain disulfide couples Cys32 to Cys95. N-linked (GlcNAc...) asparagine glycosylation is found at Asn35, Asn70, Asn133, Asn296, Asn412, and Asn417. The FAD-binding PCMH-type domain maps to 73–249; that stretch reads SMPKPSIIIV…LAFKVKLVTV (177 aa). The segment at residues 110-174 is a cross-link (6-(S-cysteinyl)-8alpha-(pros-histidyl)-FAD (His-Cys)); it reads HDYDGLSYVS…EVHAFPAGVC (65 aa).

The protein belongs to the oxygen-dependent FAD-linked oxidoreductase family. FAD is required as a cofactor. The FAD cofactor is bound via a bicovalent 6-S-cysteinyl, 8alpha-N1-histidyl FAD linkage.

The protein localises to the secreted. Its subcellular location is the cell wall. This is Berberine bridge enzyme-like 12 from Arabidopsis thaliana (Mouse-ear cress).